Here is a 184-residue protein sequence, read N- to C-terminus: Orotate phosphoribosyltransferase (184 aa).

5-phospho-alpha-D-ribose 1-diphosphate contacts are provided by residues Arg-99, Lys-100, Lys-103, His-105, and 125-133 (EDTTTTGNS). 2 residues coordinate orotate: Thr-129 and Arg-157.

The protein belongs to the purine/pyrimidine phosphoribosyltransferase family. PyrE subfamily. In terms of assembly, homodimer. Mg(2+) serves as cofactor.

It carries out the reaction orotidine 5'-phosphate + diphosphate = orotate + 5-phospho-alpha-D-ribose 1-diphosphate. It functions in the pathway pyrimidine metabolism; UMP biosynthesis via de novo pathway; UMP from orotate: step 1/2. Functionally, catalyzes the transfer of a ribosyl phosphate group from 5-phosphoribose 1-diphosphate to orotate, leading to the formation of orotidine monophosphate (OMP). This chain is Orotate phosphoribosyltransferase, found in Corynebacterium glutamicum (strain ATCC 13032 / DSM 20300 / JCM 1318 / BCRC 11384 / CCUG 27702 / LMG 3730 / NBRC 12168 / NCIMB 10025 / NRRL B-2784 / 534).